The chain runs to 208 residues: N-(5'-phosphoribosyl)anthranilate isomerase (208 aa).

This sequence belongs to the TrpF family.

The enzyme catalyses N-(5-phospho-beta-D-ribosyl)anthranilate = 1-(2-carboxyphenylamino)-1-deoxy-D-ribulose 5-phosphate. It functions in the pathway amino-acid biosynthesis; L-tryptophan biosynthesis; L-tryptophan from chorismate: step 3/5. The sequence is that of N-(5'-phosphoribosyl)anthranilate isomerase (trpF) from Pyrobaculum aerophilum (strain ATCC 51768 / DSM 7523 / JCM 9630 / CIP 104966 / NBRC 100827 / IM2).